The sequence spans 255 residues: Accessory gland-specific peptide 26Aa (255 aa).

An N-terminal signal peptide occupies residues 1–18 (MNLILLCSQILLLLFTVA). Residues 86-110 (PINNSKSRKNSSTLPSQILTDKPNQ) are disordered. Residues 87 to 110 (INNSKSRKNSSTLPSQILTDKPNQ) are compositionally biased toward polar residues. N-linked (GlcNAc...) asparagine glycans are attached at residues N88, N95, and N136. Disordered stretches follow at residues 177-196 (NAQN…SKDI) and 235-255 (NNPA…PSTT). Residues 183–192 (KSTKSCKKRP) show a composition bias toward basic residues. Residues 245–255 (KSPSEGNPSTT) show a composition bias toward polar residues.

Post-translationally, it undergoes several cleavages as it is secreted and it is further processed in the recipient female. As to expression, main cells of the accessory glands of males.

It localises to the secreted. The protein resides in the extracellular space. Its function is as follows. This protein is transferred from male to female's hemolymph during mating, affecting egglaying and behavior after mating. This Drosophila sechellia (Fruit fly) protein is Accessory gland-specific peptide 26Aa (Acp26Aa).